The primary structure comprises 69 residues: Sodium channel toxin (69 aa).

Residues 2-66 enclose the LCN-type CS-alpha/beta domain; the sequence is KNDYPVDTAK…SPTKTSGRCN (65 aa). Intrachain disulfides connect Cys-14/Cys-65, Cys-18/Cys-41, Cys-27/Cys-48, and Cys-31/Cys-50.

Belongs to the long (4 C-C) scorpion toxin superfamily. Sodium channel inhibitor family. As to expression, expressed by the venom gland.

It is found in the secreted. In terms of biological role, inhibits voltage-gated sodium channels (Nav). The polypeptide is Sodium channel toxin (Tityus metuendus (Scorpion)).